The following is a 259-amino-acid chain: MELLAKTRKLNALLQSAAGKPVNFREMSDTMCEVIEANVFVVSRRGKLLGYAIHQQIENERMKHMLAERQFPEEYTQSLFNVTETSSNLGVDSDYTAFPVENRELFGQGLTTIVPIVGGGERLGTLVLARLGQEFLDDDLILAEYSSTVVGMEILREKAEEIEEEARSKAVVQMAISSLSYSELEAIEHIFEELNGTEGLLVASKIADRVGITRSVIVNALRKLESAGVIESRSLGMKGTYIKVLNDKFLQELAKLKTN.

The GAF domain stretch occupies residues 1 to 155 (MELLAKTRKL…SSTVVGMEIL (155 aa)). Residues 203–222 (ASKIADRVGITRSVIVNALR) constitute a DNA-binding region (H-T-H motif). S215 bears the Phosphoserine mark.

The protein belongs to the CodY family.

The protein resides in the cytoplasm. DNA-binding global transcriptional regulator which is involved in the adaptive response to starvation and acts by directly or indirectly controlling the expression of numerous genes in response to nutrient availability. During rapid exponential growth, CodY is highly active and represses genes whose products allow adaptation to nutrient depletion. The chain is Global transcriptional regulator CodY from Bacillus mycoides (strain KBAB4) (Bacillus weihenstephanensis).